The sequence spans 1069 residues: Rab GTPase-activating protein 1 (1069 aa).

A disordered region spans residues M1 to E79. Residues V7–S22 show a composition bias toward low complexity. The residue at position 42 (S42) is a Phosphoserine. The 157-residue stretch at E142–I298 folds into the PID domain. S360 is modified (phosphoserine). A disordered region spans residues E482 to G527. Over residues T489 to I506 the composition is skewed to polar residues. A compositionally biased stretch (acidic residues) spans P510–E520. The region spanning G566–G752 is the Rab-GAP TBC domain. Residues K798–K1047 are a coiled coil. At T996 the chain carries Phosphothreonine.

As to quaternary structure, interacts with RAB6A and tubulin gamma.

The protein resides in the cytoplasm. It localises to the cytosol. The protein localises to the cytoskeleton. It is found in the microtubule organizing center. Its subcellular location is the centrosome. May act as a GTPase-activating protein of RAB6A. May play a role in microtubule nucleation by centrosome. May participate in a RAB6A-mediated pathway involved in the metaphase-anaphase transition. This chain is Rab GTPase-activating protein 1, found in Pongo abelii (Sumatran orangutan).